The chain runs to 193 residues: Peptidyl-tRNA hydrolase (193 aa).

Residue His-17 coordinates tRNA. His-22 functions as the Proton acceptor in the catalytic mechanism. The tRNA site is built by Phe-68, Asn-70, and Asn-116.

Belongs to the PTH family. In terms of assembly, monomer.

Its subcellular location is the cytoplasm. The catalysed reaction is an N-acyl-L-alpha-aminoacyl-tRNA + H2O = an N-acyl-L-amino acid + a tRNA + H(+). In terms of biological role, hydrolyzes ribosome-free peptidyl-tRNAs (with 1 or more amino acids incorporated), which drop off the ribosome during protein synthesis, or as a result of ribosome stalling. Its function is as follows. Catalyzes the release of premature peptidyl moieties from peptidyl-tRNA molecules trapped in stalled 50S ribosomal subunits, and thus maintains levels of free tRNAs and 50S ribosomes. This Xanthomonas campestris pv. campestris (strain ATCC 33913 / DSM 3586 / NCPPB 528 / LMG 568 / P 25) protein is Peptidyl-tRNA hydrolase.